Reading from the N-terminus, the 87-residue chain is DNA-directed RNA polymerase subunit omega (87 aa).

The protein belongs to the RNA polymerase subunit omega family. As to quaternary structure, the RNAP catalytic core consists of 2 alpha, 1 beta, 1 beta' and 1 omega subunit. When a sigma factor is associated with the core the holoenzyme is formed, which can initiate transcription.

The enzyme catalyses RNA(n) + a ribonucleoside 5'-triphosphate = RNA(n+1) + diphosphate. Its function is as follows. Promotes RNA polymerase assembly. Latches the N- and C-terminal regions of the beta' subunit thereby facilitating its interaction with the beta and alpha subunits. This is DNA-directed RNA polymerase subunit omega from Ectopseudomonas mendocina (strain ymp) (Pseudomonas mendocina).